We begin with the raw amino-acid sequence, 199 residues long: Superoxide dismutase [Cu-Zn] (199 aa).

The N-terminal stretch at 1-22 (MKLTKVALFSLGLFGFSSMALA) is a signal peptide. H92, H94, and H117 together coordinate Cu cation. A disulfide bond links C99 and C195. Residues H117, H126, H135, and D138 each contribute to the Zn(2+) site. H173 is a Cu cation binding site.

This sequence belongs to the Cu-Zn superoxide dismutase family. As to quaternary structure, homodimer. Cu cation is required as a cofactor. Zn(2+) serves as cofactor.

Its subcellular location is the periplasm. It carries out the reaction 2 superoxide + 2 H(+) = H2O2 + O2. Destroys radicals which are normally produced within the cells and which are toxic to biological systems. May play a role in the interactive biology of organisms with their hosts and so contribute to their capacity to cause disease. This chain is Superoxide dismutase [Cu-Zn] (sodC), found in Haemophilus ducreyi (strain 35000HP / ATCC 700724).